The following is a 359-amino-acid chain: Phospho-N-acetylmuramoyl-pentapeptide-transferase (359 aa).

10 consecutive transmembrane segments (helical) span residues 3–23, 55–75, 84–104, 117–137, 156–176, 190–210, 231–251, 255–275, 283–303, and 330–350; these read QILIAVAIALAVAILLTPVLI, VAIIAGIWVSYFGTHLVGVLM, GLLVLGLATSLGVVGFLDDLI, TAKTVGILVAAVLFGVLALQF, IATVTLAPAVFVLFCVVVVSA, LAAGAMAMVCAAYVLITFWQF, LAIIAAATAGACIGFLWWNAA, IFMGDTGSLALGGIIAGLSVT, VVLGALFVAEVTSVVVQILAF, and VIIRFWLLTAIACGLGVALFY.

It belongs to the glycosyltransferase 4 family. MraY subfamily. The cofactor is Mg(2+).

Its subcellular location is the cell membrane. It carries out the reaction UDP-N-acetyl-alpha-D-muramoyl-L-alanyl-gamma-D-glutamyl-meso-2,6-diaminopimeloyl-D-alanyl-D-alanine + di-trans,octa-cis-undecaprenyl phosphate = di-trans,octa-cis-undecaprenyl diphospho-N-acetyl-alpha-D-muramoyl-L-alanyl-D-glutamyl-meso-2,6-diaminopimeloyl-D-alanyl-D-alanine + UMP. Its pathway is cell wall biogenesis; peptidoglycan biosynthesis. In terms of biological role, catalyzes the initial step of the lipid cycle reactions in the biosynthesis of the cell wall peptidoglycan: transfers peptidoglycan precursor phospho-MurNAc-pentapeptide from UDP-MurNAc-pentapeptide onto the lipid carrier undecaprenyl phosphate, yielding undecaprenyl-pyrophosphoryl-MurNAc-pentapeptide, known as lipid I. In Mycolicibacterium gilvum (strain PYR-GCK) (Mycobacterium gilvum (strain PYR-GCK)), this protein is Phospho-N-acetylmuramoyl-pentapeptide-transferase.